A 544-amino-acid chain; its full sequence is Chaperonin GroEL (544 aa).

Residues 30–33 (TLGP), Lys-51, 87–91 (DGTTT), Gly-415, and Asp-495 each bind ATP.

Belongs to the chaperonin (HSP60) family. In terms of assembly, forms a cylinder of 14 subunits composed of two heptameric rings stacked back-to-back. Interacts with the co-chaperonin GroES.

It is found in the cytoplasm. It catalyses the reaction ATP + H2O + a folded polypeptide = ADP + phosphate + an unfolded polypeptide.. In terms of biological role, together with its co-chaperonin GroES, plays an essential role in assisting protein folding. The GroEL-GroES system forms a nano-cage that allows encapsulation of the non-native substrate proteins and provides a physical environment optimized to promote and accelerate protein folding. This Neisseria meningitidis serogroup B (strain ATCC BAA-335 / MC58) protein is Chaperonin GroEL.